The following is a 197-amino-acid chain: Probable chorismate pyruvate-lyase (197 aa).

The span at 1-14 shows a compositional bias: basic and acidic residues; sequence MRFDAADAHWRETP. The interval 1-25 is disordered; sequence MRFDAADAHWRETPRPGASGAQKDW. Residues arginine 73, leucine 111, and glutamate 173 each contribute to the substrate site.

Belongs to the UbiC family.

The protein resides in the cytoplasm. It catalyses the reaction chorismate = 4-hydroxybenzoate + pyruvate. The protein operates within cofactor biosynthesis; ubiquinone biosynthesis. Removes the pyruvyl group from chorismate, with concomitant aromatization of the ring, to provide 4-hydroxybenzoate (4HB) for the ubiquinone pathway. In Burkholderia thailandensis (strain ATCC 700388 / DSM 13276 / CCUG 48851 / CIP 106301 / E264), this protein is Probable chorismate pyruvate-lyase.